The chain runs to 185 residues: UPF0301 protein Tbd_2579 (185 aa).

The protein belongs to the UPF0301 (AlgH) family.

The chain is UPF0301 protein Tbd_2579 from Thiobacillus denitrificans (strain ATCC 25259 / T1).